A 490-amino-acid chain; its full sequence is 4-hydroxyphenylacetaldehyde synthase (490 aa).

L-phenylalanine-binding residues include proline 97, histidine 198, and histidine 313. Lysine 314 bears the N6-(pyridoxal phosphate)lysine mark. Phenylalanine 343 contacts L-phenylalanine.

It belongs to the group II decarboxylase family. As to quaternary structure, homodimer. Requires pyridoxal 5'-phosphate as cofactor.

It carries out the reaction L-tyrosine + O2 + H2O + H(+) = (4-hydroxyphenyl)acetaldehyde + H2O2 + NH4(+) + CO2. Catalyzes the production of 4-hydroxyphenylacetaldehyde (HPAA) directly from L-tyrosine, tyramine not being formed as an intermediate. The chain is 4-hydroxyphenylacetaldehyde synthase from Rhodiola rosea (Roseroot).